The following is an 833-amino-acid chain: EF-hand domain-containing family member B (833 aa).

2 consecutive EF-hand domains span residues glutamine 561–serine 596 and leucine 597–methionine 632. 8 residues coordinate Ca(2+): aspartate 574, aspartate 578, methionine 580, glutamate 585, aspartate 610, aspartate 612, aspartate 614, and glutamate 621.

Microtubule inner protein component of sperm flagellar doublet microtubules. Interacts with STIM1 and ORAI1; the interactions take place upon Ca(2+)-store depletion and dissociate through a Ca(2+)-dependent mechanism. Interaction with STIM1 inhibits STIM1 interaction with SARAF. In terms of tissue distribution, expressed in airway epithelial cells.

The protein resides in the cytoplasm. It is found in the cytoskeleton. Its subcellular location is the cilium axoneme. The protein localises to the flagellum axoneme. Functionally, microtubule inner protein (MIP) part of the dynein-decorated doublet microtubules (DMTs) in cilia axoneme, which is required for motile cilia beating. Cytosolic sensor for calcium, modulates the interaction of STIM1 and ORAI1 upon store depletion and the activation of store-operated Ca(2+) entry (SOCE) and NFAT translocation from cytosol to nucleus. The polypeptide is EF-hand domain-containing family member B (Homo sapiens (Human)).